A 283-amino-acid polypeptide reads, in one-letter code: Thymidylate synthase (283 aa).

Residue R22 coordinates dUMP. The Nucleophile role is filled by C160. DUMP-binding positions include 180–183, N191, and 221–223; these read RSCD and HIY. D183 contacts (6R)-5,10-methylene-5,6,7,8-tetrahydrofolate. S282 serves as a coordination point for (6R)-5,10-methylene-5,6,7,8-tetrahydrofolate.

This sequence belongs to the thymidylate synthase family. Bacterial-type ThyA subfamily. Homodimer.

Its subcellular location is the cytoplasm. It carries out the reaction dUMP + (6R)-5,10-methylene-5,6,7,8-tetrahydrofolate = 7,8-dihydrofolate + dTMP. Its pathway is pyrimidine metabolism; dTTP biosynthesis. Catalyzes the reductive methylation of 2'-deoxyuridine-5'-monophosphate (dUMP) to 2'-deoxythymidine-5'-monophosphate (dTMP) while utilizing 5,10-methylenetetrahydrofolate (mTHF) as the methyl donor and reductant in the reaction, yielding dihydrofolate (DHF) as a by-product. This enzymatic reaction provides an intracellular de novo source of dTMP, an essential precursor for DNA biosynthesis. This Vibrio vulnificus (strain CMCP6) protein is Thymidylate synthase.